Reading from the N-terminus, the 380-residue chain is Cytochrome b (380 aa).

Transmembrane regions (helical) follow at residues 34–54 (FGSL…FLAM), 78–99 (WLLR…YFHI), 114–134 (WYTG…GYIL), and 179–199 (FFTL…IHLL). Residues H84 and H98 each contribute to the heme b site. Positions 183 and 197 each coordinate heme b. H202 is an a ubiquinone binding site. 4 helical membrane passes run 227 to 247 (YKDL…TLFL), 289 to 309 (LGGV…PTLH), 321 to 341 (FTQI…WIGA), and 348 to 368 (FIMI…LLIP).

Belongs to the cytochrome b family. As to quaternary structure, the cytochrome bc1 complex contains 3 respiratory subunits (MT-CYB, CYC1 and UQCRFS1), 2 core proteins (UQCRC1 and UQCRC2) and probably 6 low-molecular weight proteins. It depends on heme b as a cofactor.

The protein localises to the mitochondrion inner membrane. Functionally, component of the ubiquinol-cytochrome c reductase complex (complex III or cytochrome b-c1 complex) that is part of the mitochondrial respiratory chain. The b-c1 complex mediates electron transfer from ubiquinol to cytochrome c. Contributes to the generation of a proton gradient across the mitochondrial membrane that is then used for ATP synthesis. This Pelomedusa subrufa (African side-necked turtle) protein is Cytochrome b (MT-CYB).